Consider the following 404-residue polypeptide: G1/S-specific cyclin-E2 (404 aa).

Residues 1–45 (MSRRSSRLQAKQQPQASQTDSPQEAQIIQAKKRKTAQDVKKRKEE) form a disordered region. The span at 7–26 (RLQAKQQPQASQTDSPQEAQ) shows a compositional bias: polar residues. Ser21 carries the post-translational modification Phosphoserine. Residues 35 to 45 (TAQDVKKRKEE) show a composition bias toward basic and acidic residues. N6-lactoyllysine is present on Lys348. Phosphoserine is present on Ser383. Thr392 is subject to Phosphothreonine.

Belongs to the cyclin family. Cyclin E subfamily. As to quaternary structure, interacts with the CDK2 (in vivo) and CDK3 (in vitro) protein kinases to form a serine/threonine kinase holoenzyme complex. The cyclin subunit imparts substrate specificity to the complex. Post-translationally, phosphorylation by CDK2 triggers its release from CDK2 and degradation via the ubiquitin proteasome pathway. Lactylated at Lys-348. Delactylated by SIRT3.

It is found in the nucleus. In terms of biological role, essential for the control of the cell cycle at the late G1 and early S phase. This is G1/S-specific cyclin-E2 (CCNE2) from Bos taurus (Bovine).